The following is a 69-amino-acid chain: Putative membrane protein insertion efficiency factor (69 aa).

This sequence belongs to the UPF0161 family.

Its subcellular location is the cell inner membrane. Functionally, could be involved in insertion of integral membrane proteins into the membrane. The chain is Putative membrane protein insertion efficiency factor from Nitrosomonas eutropha (strain DSM 101675 / C91 / Nm57).